The primary structure comprises 777 residues: Isoamylase (777 aa).

The first 32 residues, 1–32 (MDPHAPQRQRSGQRLRALALAALACALSPAHA), serve as a signal peptide directing secretion. D162, E263, T264, N266, and D293 together coordinate Ca(2+). The Nucleophile role is filled by D410. C419 and C423 are disulfide-bonded. E458 (proton donor) is an active-site residue.

The protein belongs to the glycosyl hydrolase 13 family. Monomer. It depends on Ca(2+) as a cofactor.

The catalysed reaction is Hydrolysis of (1-&gt;6)-alpha-D-glucosidic branch linkages in glycogen, amylopectin and their beta-limit dextrins.. In terms of biological role, has a high rate of hydrolysis for glycogen. Does not cleave pullulan. This Flavobacterium sp protein is Isoamylase (iam).